A 113-amino-acid chain; its full sequence is U11-theraphotoxin-Hhn1t (113 aa).

A signal peptide spans 1 to 21; sequence MNTVRVTFLLVFVLAVSLGQA. A propeptide spanning residues 22–74 is cleaved from the precursor; the sequence is DKDENRMEMQEKTEQGKSYLDFAENLLLQKLEELEAKLLEEDSEESRNSRQKR. The segment covering 60–69 has biased composition (basic and acidic residues); it reads LEEDSEESRN. The interval 60–83 is disordered; it reads LEEDSEESRNSRQKRCIGEGVPCD. 3 cysteine pairs are disulfide-bonded: Cys75–Cys90, Cys82–Cys95, and Cys89–Cys110.

This sequence belongs to the neurotoxin 14 (magi-1) family. 01 (HNTX-16) subfamily. As to expression, expressed by the venom gland.

Its subcellular location is the secreted. In terms of biological role, probable ion channel inhibitor. The sequence is that of U11-theraphotoxin-Hhn1t from Cyriopagopus hainanus (Chinese bird spider).